Consider the following 84-residue polypeptide: Beta-mammal toxin Cn2 (84 aa).

A signal peptide spans 1 to 16 (LLIITACLALIGTVWA). The region spanning 17-82 (KEGYLVDKNT…VWPLPNKRCS (66 aa)) is the LCN-type CS-alpha/beta domain. 4 disulfides stabilise this stretch: cysteine 28–cysteine 81, cysteine 32–cysteine 57, cysteine 41–cysteine 62, and cysteine 45–cysteine 64. Serine 82 carries the post-translational modification Serine amide.

It belongs to the long (4 C-C) scorpion toxin superfamily. Sodium channel inhibitor family. Beta subfamily. As to expression, expressed by the venom gland.

It is found in the secreted. In terms of biological role, mammal beta-toxins bind voltage-independently at site-4 of sodium channels (Nav) and shift the activation voltage to more negative potentials. This toxin is active against mammals. This chain is Beta-mammal toxin Cn2, found in Centruroides noxius (Mexican scorpion).